Here is a 120-residue protein sequence, read N- to C-terminus: Large ribosomal subunit protein uL18 (120 aa).

Belongs to the universal ribosomal protein uL18 family. Part of the 50S ribosomal subunit; part of the 5S rRNA/L5/L18/L25 subcomplex. Contacts the 5S and 23S rRNAs.

Its function is as follows. This is one of the proteins that bind and probably mediate the attachment of the 5S RNA into the large ribosomal subunit, where it forms part of the central protuberance. In Geobacillus kaustophilus (strain HTA426), this protein is Large ribosomal subunit protein uL18.